A 90-amino-acid chain; its full sequence is N(2)-fixation sustaining protein CowN (90 aa).

The protein belongs to the CowN family.

Functionally, is required to sustain N(2)-dependent growth in the presence of low levels of carbon monoxide (CO). Probably acts by protecting the N(2) fixation ability of the nitrogenase complex, which is inactivated in the presence of CO. The protein is N(2)-fixation sustaining protein CowN of Methylocella silvestris (strain DSM 15510 / CIP 108128 / LMG 27833 / NCIMB 13906 / BL2).